Reading from the N-terminus, the 1096-residue chain is Cation-transporting ATPase 5 (1096 aa).

Over 1 to 19 (MDSIELKQLVPENDSEPGT) the chain is Cytoplasmic. A helical membrane pass occupies residues 20–41 (PRQLLFQHYDISNEETIGIKPF). Topologically, residues 42-47 (KSIPAK) are lumenal. Residues 48 to 70 (VYILRVTEILTLGLLHLILTWLP) form a helical membrane-spanning segment. Residues 71–193 (EFRLKWIEAP…LVSTKKSIVT (123 aa)) lie on the Cytoplasmic side of the membrane. Residues 194–216 (ILLNEVLHPFYLFQAVSVLIWLC) form a helical membrane-spanning segment. At 217–220 (DSFV) the chain is on the lumenal side. Residues 221-238 (FYSCCIVFISSYSIFLSV) traverse the membrane as a helical segment. The Cytoplasmic portion of the chain corresponds to 239–391 (KESKESENRI…NLRPSQLYLD (153 aa)). The chain crosses the membrane as a helical span at residues 392–412 (SMSFLKTMAILSFVSIVFIAI). Topologically, residues 413–425 (YLNLYNASFGHVV) are lumenal. Residues 426–447 (LRSLDVLTILVPPALPATLSVG) form a helical membrane-spanning segment. Residues 448–895 (IANSIARLSR…SLILSHRCFQ (448 aa)) lie on the Cytoplasmic side of the membrane. The 4-aspartylphosphate intermediate role is filled by aspartate 480. Positions 838 and 842 each coordinate Mg(2+). Residues 896–915 (YMVLCAIVQFSGVFFLYLKN) form a helical membrane-spanning segment. Topologically, residues 916–922 (YNFNDNQ) are lumenal. A helical membrane pass occupies residues 923 to 940 (FLFMDLLIIFPLSAAMSY). The Cytoplasmic segment spans residues 941–958 (FDPAQNLTSNRPNSTLFG). The chain crosses the membrane as a helical span at residues 959 to 982 (KGRVKDLGIQSVLIWLSHGLLTLI). Residues 983-1003 (LHELNWVELPEWQLEKSNTKN) lie on the Lumenal side of the membrane. A helical membrane pass occupies residues 1004-1026 (VLVTSIFLLSSLQYLGICIGINQ). Residues 1027–1040 (SSEFLSPIWKKKTY) lie on the Cytoplasmic side of the membrane. The helical transmembrane segment at 1041–1060 (VCLCTTIGLCNIYLCFANEN) threads the bilayer. Residues 1061-1075 (HIISRCLQITRLPTL) lie on the Lumenal side of the membrane. A helical membrane pass occupies residues 1076 to 1096 (YRFIILFMGVISCCLTSILNM).

Belongs to the cation transport ATPase (P-type) (TC 3.A.3) family. Type V subfamily.

The protein resides in the endoplasmic reticulum membrane. It localises to the golgi apparatus membrane. The enzyme catalyses ATP + H2O = ADP + phosphate + H(+). In terms of biological role, plays a role in regulating calcium and manganese homeostasis responsible for cell cycle progression. In Schizosaccharomyces pombe (strain 972 / ATCC 24843) (Fission yeast), this protein is Cation-transporting ATPase 5 (cta5).